The chain runs to 429 residues: Serine--tRNA ligase (429 aa).

Residue 235–237 (TAE) participates in L-serine binding. Position 266–268 (266–268 (RSE)) interacts with ATP. Residue glutamate 289 coordinates L-serine. 353 to 356 (EISS) is an ATP binding site. Serine 389 contacts L-serine.

It belongs to the class-II aminoacyl-tRNA synthetase family. Type-1 seryl-tRNA synthetase subfamily. In terms of assembly, homodimer. The tRNA molecule binds across the dimer.

It localises to the cytoplasm. It carries out the reaction tRNA(Ser) + L-serine + ATP = L-seryl-tRNA(Ser) + AMP + diphosphate + H(+). The enzyme catalyses tRNA(Sec) + L-serine + ATP = L-seryl-tRNA(Sec) + AMP + diphosphate + H(+). It functions in the pathway aminoacyl-tRNA biosynthesis; selenocysteinyl-tRNA(Sec) biosynthesis; L-seryl-tRNA(Sec) from L-serine and tRNA(Sec): step 1/1. Functionally, catalyzes the attachment of serine to tRNA(Ser). Is also able to aminoacylate tRNA(Sec) with serine, to form the misacylated tRNA L-seryl-tRNA(Sec), which will be further converted into selenocysteinyl-tRNA(Sec). The protein is Serine--tRNA ligase of Histophilus somni (strain 129Pt) (Haemophilus somnus).